The chain runs to 318 residues: tRNA pseudouridine synthase B (318 aa).

Residue D47 is the Nucleophile of the active site.

Belongs to the pseudouridine synthase TruB family. Type 1 subfamily.

The catalysed reaction is uridine(55) in tRNA = pseudouridine(55) in tRNA. Responsible for synthesis of pseudouridine from uracil-55 in the psi GC loop of transfer RNAs. The sequence is that of tRNA pseudouridine synthase B from Shewanella putrefaciens (strain CN-32 / ATCC BAA-453).